The chain runs to 146 residues: Large ribosomal subunit protein uL15 (146 aa).

The span at 1 to 18 (MKLHELKPSEGSRKERNR) shows a compositional bias: basic and acidic residues. Residues 1-50 (MKLHELKPSEGSRKERNRVGRGTGSGNGKTSGRGHKGQKARSGGGVRLGF) are disordered. Residues 21–31 (RGTGSGNGKTS) are compositionally biased toward gly residues.

Belongs to the universal ribosomal protein uL15 family. As to quaternary structure, part of the 50S ribosomal subunit.

In terms of biological role, binds to the 23S rRNA. The protein is Large ribosomal subunit protein uL15 of Listeria welshimeri serovar 6b (strain ATCC 35897 / DSM 20650 / CCUG 15529 / CIP 8149 / NCTC 11857 / SLCC 5334 / V8).